The primary structure comprises 823 residues: Leucine--tRNA ligase (823 aa).

The short motif at 55–65 (PYPSGNLHIGH) is the 'HIGH' region element. Residues 590–594 (KMSKS) carry the 'KMSKS' region motif. An ATP-binding site is contributed by K593.

Belongs to the class-I aminoacyl-tRNA synthetase family.

It is found in the cytoplasm. It catalyses the reaction tRNA(Leu) + L-leucine + ATP = L-leucyl-tRNA(Leu) + AMP + diphosphate. This is Leucine--tRNA ligase from Deinococcus radiodurans (strain ATCC 13939 / DSM 20539 / JCM 16871 / CCUG 27074 / LMG 4051 / NBRC 15346 / NCIMB 9279 / VKM B-1422 / R1).